A 281-amino-acid polypeptide reads, in one-letter code: MKHPFSRLFSFGEKEQEEMEEKQEREEVRHIPVKSIIPNRFQPRTMFDEEKIDELALTIRTHGIIQPIVVRECGNGRFEIIAGERRWRAVQKLGWTEIPAIIKNLNDKETASVALIENLQREELTPIEEAMAYAKLIELHDLTQEALAQRLGKGQSTIANKLRLLKLPQEVQEALLQRAITERHARALIALKDKEKQLKLLQEIIDKQLNVKQTEDRVLKLLEAGERKPKPKRKAFSRDMRIAVNTIRQSLSMVESSGVSVQSEEEEFDDYYQITIRIAKK.

Residues 1 to 24 (MKHPFSRLFSFGEKEQEEMEEKQE) form a disordered region. The segment at residues 145–164 (EALAQRLGKGQSTIANKLRL) is a DNA-binding region (H-T-H motif).

This sequence belongs to the ParB family.

The protein localises to the cytoplasm. It is found in the nucleoid. Functionally, effects nucleoid occlusion by binding relatively nonspecifically to DNA and preventing the assembly of the division machinery in the vicinity of the nucleoid, especially under conditions that disturb the cell cycle. It helps to coordinate cell division and chromosome segregation by preventing the formation of the Z ring through the nucleoid, which would cause chromosome breakage. The protein is Nucleoid occlusion protein of Geobacillus kaustophilus (strain HTA426).